Reading from the N-terminus, the 365-residue chain is UDP-N-acetylglucosamine--N-acetylmuramyl-(pentapeptide) pyrophosphoryl-undecaprenol N-acetylglucosamine transferase (365 aa).

UDP-N-acetyl-alpha-D-glucosamine contacts are provided by residues 11–13 (TGG), N124, R165, S192, I246, and Q291.

Belongs to the glycosyltransferase 28 family. MurG subfamily.

The protein localises to the cell inner membrane. The catalysed reaction is di-trans,octa-cis-undecaprenyl diphospho-N-acetyl-alpha-D-muramoyl-L-alanyl-D-glutamyl-meso-2,6-diaminopimeloyl-D-alanyl-D-alanine + UDP-N-acetyl-alpha-D-glucosamine = di-trans,octa-cis-undecaprenyl diphospho-[N-acetyl-alpha-D-glucosaminyl-(1-&gt;4)]-N-acetyl-alpha-D-muramoyl-L-alanyl-D-glutamyl-meso-2,6-diaminopimeloyl-D-alanyl-D-alanine + UDP + H(+). The protein operates within cell wall biogenesis; peptidoglycan biosynthesis. Functionally, cell wall formation. Catalyzes the transfer of a GlcNAc subunit on undecaprenyl-pyrophosphoryl-MurNAc-pentapeptide (lipid intermediate I) to form undecaprenyl-pyrophosphoryl-MurNAc-(pentapeptide)GlcNAc (lipid intermediate II). In Nitratidesulfovibrio vulgaris (strain ATCC 29579 / DSM 644 / CCUG 34227 / NCIMB 8303 / VKM B-1760 / Hildenborough) (Desulfovibrio vulgaris), this protein is UDP-N-acetylglucosamine--N-acetylmuramyl-(pentapeptide) pyrophosphoryl-undecaprenol N-acetylglucosamine transferase.